We begin with the raw amino-acid sequence, 205 residues long: LexA repressor (205 aa).

Residues 28–48 constitute a DNA-binding region (H-T-H motif); that stretch reads RAEIATRLGFKSANAAEEHLK. Catalysis depends on for autocatalytic cleavage activity residues S122 and K159.

Belongs to the peptidase S24 family. Homodimer.

It catalyses the reaction Hydrolysis of Ala-|-Gly bond in repressor LexA.. Represses a number of genes involved in the response to DNA damage (SOS response), including recA and lexA. In the presence of single-stranded DNA, RecA interacts with LexA causing an autocatalytic cleavage which disrupts the DNA-binding part of LexA, leading to derepression of the SOS regulon and eventually DNA repair. The sequence is that of LexA repressor from Shewanella denitrificans (strain OS217 / ATCC BAA-1090 / DSM 15013).